Here is a 270-residue protein sequence, read N- to C-terminus: Malonyl-[acyl-carrier protein] O-methyltransferase (270 aa).

It belongs to the methyltransferase superfamily.

It carries out the reaction malonyl-[ACP] + S-adenosyl-L-methionine = malonyl-[ACP] methyl ester + S-adenosyl-L-homocysteine. Its pathway is cofactor biosynthesis; biotin biosynthesis. In terms of biological role, converts the free carboxyl group of a malonyl-thioester to its methyl ester by transfer of a methyl group from S-adenosyl-L-methionine (SAM). It allows to synthesize pimeloyl-ACP via the fatty acid synthetic pathway. The protein is Malonyl-[acyl-carrier protein] O-methyltransferase of Marinomonas sp. (strain MWYL1).